The primary structure comprises 436 residues: 4-hydroxyphenylpyruvate dioxygenase (436 aa).

VOC domains lie at 38–194 (RFHH…GFEV) and 210–370 (RLDH…IFTK). Residues His-213, His-295, and Glu-381 each coordinate Fe cation.

This sequence belongs to the 4HPPD family. Fe cation serves as cofactor.

The protein localises to the cytoplasm. It catalyses the reaction 3-(4-hydroxyphenyl)pyruvate + O2 = homogentisate + CO2. The protein operates within amino-acid degradation; L-phenylalanine degradation; acetoacetate and fumarate from L-phenylalanine: step 3/6. It participates in cofactor biosynthesis; prenylquinone biosynthesis. The polypeptide is 4-hydroxyphenylpyruvate dioxygenase (Plectranthus scutellarioides (Coleus)).